We begin with the raw amino-acid sequence, 350 residues long: Biotin synthase (350 aa).

The 225-residue stretch at N41 to S265 folds into the Radical SAM core domain. Residues C56, C60, and C63 each coordinate [4Fe-4S] cluster. The [2Fe-2S] cluster site is built by C100, C131, C191, and R263.

The protein belongs to the radical SAM superfamily. Biotin synthase family. As to quaternary structure, homodimer. It depends on [4Fe-4S] cluster as a cofactor. The cofactor is [2Fe-2S] cluster.

It carries out the reaction (4R,5S)-dethiobiotin + (sulfur carrier)-SH + 2 reduced [2Fe-2S]-[ferredoxin] + 2 S-adenosyl-L-methionine = (sulfur carrier)-H + biotin + 2 5'-deoxyadenosine + 2 L-methionine + 2 oxidized [2Fe-2S]-[ferredoxin]. The protein operates within cofactor biosynthesis; biotin biosynthesis; biotin from 7,8-diaminononanoate: step 2/2. Its function is as follows. Catalyzes the conversion of dethiobiotin (DTB) to biotin by the insertion of a sulfur atom into dethiobiotin via a radical-based mechanism. In Shewanella loihica (strain ATCC BAA-1088 / PV-4), this protein is Biotin synthase.